The sequence spans 287 residues: MSVVANPLHPLFAAGVEDIDLREALGSTEVREIERLMDEKSVLVFRGQPLSQDQQIAFARNFGPLEGGFIKVNQRPSRFKYAELADISNVSLDGKVAQRDAREVVGNFANQLWHSDSSFQQPAARYSMLSAVVVPPSGGDTEFCDMRAAYDALPRDLQSELEGLRAEHYALNSRFLLGDTDYSEAQRNAMPPVNWPLVRTHAGSGRKFLFIGAHASHVEGLPVAEGRMLLAELLEHATQREFVYRHRWNVGDLVMWDNRCVLHRGRRYDISARRELRRATTLDDAVV.

At tryptophan 113 the chain carries 3-hydroxytryptophan; by autocatalysis. Fe cation contacts are provided by histidine 114 and aspartate 116. 2-oxoglutarate contacts are provided by threonine 141 and tryptophan 248. Position 263 (histidine 263) interacts with Fe cation. 2 residues coordinate 2-oxoglutarate: arginine 274 and arginine 278.

The protein belongs to the TfdA dioxygenase family. Fe(2+) serves as cofactor. Hydroxylated on Trp-113; inactivates the enzyme.

It catalyses the reaction (2,4-dichlorophenoxy)acetate + 2-oxoglutarate + O2 = 2,4-dichlorophenol + glyoxylate + succinate + CO2. The protein operates within xenobiotic degradation; (2,4-dichlorophenoxy)acetate degradation. Its activity is regulated as follows. Activated by ascorbate. Involved in degradation of the herbicide 2,4-dichlorophenoxyacetic acid (2,4-D). Is also able to degrade 2-methyl-4-chlorophenoxyacetic acid and 3-chlorobenzoic acid. This Cupriavidus pinatubonensis (strain JMP 134 / LMG 1197) (Cupriavidus necator (strain JMP 134)) protein is Alpha-ketoglutarate-dependent 2,4-dichlorophenoxyacetate dioxygenase (tfdA).